We begin with the raw amino-acid sequence, 509 residues long: ATP synthase subunit alpha, mitochondrial (509 aa).

171–178 serves as a coordination point for ATP; the sequence is GDRQTGKT.

This sequence belongs to the ATPase alpha/beta chains family. In terms of assembly, F-type ATPases have 2 components, CF(1) - the catalytic core - and CF(0) - the membrane proton channel. CF(1) has five subunits: alpha(3), beta(3), gamma(1), delta(1), epsilon(1). CF(0) has three main subunits: a, b and c.

It is found in the mitochondrion. Its subcellular location is the mitochondrion inner membrane. Functionally, mitochondrial membrane ATP synthase (F(1)F(0) ATP synthase or Complex V) produces ATP from ADP in the presence of a proton gradient across the membrane which is generated by electron transport complexes of the respiratory chain. F-type ATPases consist of two structural domains, F(1) - containing the extramembraneous catalytic core, and F(0) - containing the membrane proton channel, linked together by a central stalk and a peripheral stalk. During catalysis, ATP synthesis in the catalytic domain of F(1) is coupled via a rotary mechanism of the central stalk subunits to proton translocation. Subunits alpha and beta form the catalytic core in F(1). Rotation of the central stalk against the surrounding alpha(3)beta(3) subunits leads to hydrolysis of ATP in three separate catalytic sites on the beta subunits. Subunit alpha does not bear the catalytic high-affinity ATP-binding sites. The sequence is that of ATP synthase subunit alpha, mitochondrial (ATPA) from Oryza sativa subsp. indica (Rice).